A 186-amino-acid polypeptide reads, in one-letter code: Peptide deformylase (186 aa).

Fe cation-binding residues include Cys-113 and His-156. Glu-157 is an active-site residue. A Fe cation-binding site is contributed by His-160.

The protein belongs to the polypeptide deformylase family. Requires Fe(2+) as cofactor.

The catalysed reaction is N-terminal N-formyl-L-methionyl-[peptide] + H2O = N-terminal L-methionyl-[peptide] + formate. Its function is as follows. Removes the formyl group from the N-terminal Met of newly synthesized proteins. Requires at least a dipeptide for an efficient rate of reaction. N-terminal L-methionine is a prerequisite for activity but the enzyme has broad specificity at other positions. The chain is Peptide deformylase from Levilactobacillus brevis (strain ATCC 367 / BCRC 12310 / CIP 105137 / JCM 1170 / LMG 11437 / NCIMB 947 / NCTC 947) (Lactobacillus brevis).